Consider the following 240-residue polypeptide: Probable transcriptional regulator ycf27 (240 aa).

Residues 5–118 (KILVIDDEAS…ELEARIRSVL (114 aa)) enclose the Response regulatory domain. Aspartate 54 carries the 4-aspartylphosphate modification. The H-T-H motif DNA-binding region spans 74 to 92 (DVPIIMLTALSDVSDRITG). The ompR/PhoB-type DNA-binding region spans 133–234 (SGIINIGFLK…ARGTGYLFQR (102 aa)).

Its subcellular location is the plastid. It localises to the chloroplast. Probable promoter-specific protein mediating the interaction between DNA and RNA polymerase. The polypeptide is Probable transcriptional regulator ycf27 (ycf27) (Porphyridium aerugineum (Red microalga)).